The primary structure comprises 257 residues: Pyrroline-5-carboxylate reductase (257 aa).

Belongs to the pyrroline-5-carboxylate reductase family.

The protein resides in the cytoplasm. It carries out the reaction L-proline + NADP(+) = (S)-1-pyrroline-5-carboxylate + NADPH + 2 H(+). The catalysed reaction is L-proline + NAD(+) = (S)-1-pyrroline-5-carboxylate + NADH + 2 H(+). It participates in amino-acid biosynthesis; L-proline biosynthesis; L-proline from L-glutamate 5-semialdehyde: step 1/1. Catalyzes the reduction of 1-pyrroline-5-carboxylate (PCA) to L-proline. The chain is Pyrroline-5-carboxylate reductase from Helicobacter pylori (strain ATCC 700392 / 26695) (Campylobacter pylori).